A 218-amino-acid chain; its full sequence is 3-oxo-tetronate 4-phosphate decarboxylase (218 aa).

Glutamate 86 functions as the Proton acceptor in the catalytic mechanism. Zn(2+) is bound by residues glutamate 86, histidine 105, and histidine 107. Tyrosine 132 acts as the Proton donor in catalysis. Histidine 172 provides a ligand contact to Zn(2+).

The protein belongs to the aldolase class II family. AraD/FucA subfamily. The cofactor is Zn(2+).

It carries out the reaction 3-dehydro-4-O-phospho-D-erythronate + H(+) = dihydroxyacetone phosphate + CO2. The enzyme catalyses 3-dehydro-4-O-phospho-L-erythronate + H(+) = dihydroxyacetone phosphate + CO2. In terms of biological role, catalyzes the decarboxylation of 3-oxo-tetronate 4-phosphate to dihydroxyacetone phosphate (DHAP) and CO(2). The sequence is that of 3-oxo-tetronate 4-phosphate decarboxylase from Pectobacterium atrosepticum (strain SCRI 1043 / ATCC BAA-672) (Erwinia carotovora subsp. atroseptica).